A 770-amino-acid chain; its full sequence is Metallothionein expression activator (770 aa).

Residues 77-97 (LVPSPKTGDGSSDKKNIDRTW) are disordered. Phosphoserine occurs at positions 80, 122, 247, 249, and 253. Thr-259 carries the post-translational modification Phosphothreonine. A disordered region spans residues 286–323 (PPPTLISPRMSNTSINGSPSRKYHRQRYPNKSPESNGL). Residues 294-304 (RMSNTSINGSP) are compositionally biased toward polar residues. Phosphoserine occurs at positions 385, 392, and 483. Phosphothreonine is present on residues Thr-486 and Thr-501. Phosphoserine is present on Ser-564. C2H2-type zinc fingers lie at residues 603–627 (FECL…IQTH) and 633–657 (YSCD…KISH). The C2H2-type 3; atypical zinc-finger motif lies at 662–685 (YICPCGKRFNREDALMVHRSRMIC). Positions 699 to 770 (LTSPKKSLLD…RTLSNETDAL (72 aa)) are disordered. Residues 705–745 (SLLDSPHDTSPVKETIARDKDGSVLMKMEEQLRDDMRKHGL) are compositionally biased toward basic and acidic residues. 2 positions are modified to phosphoserine: Ser-709 and Ser-714. Residues 754–770 (AHEQNSNRTLSNETDAL) show a composition bias toward polar residues.

Its subcellular location is the nucleus. Plays a role in regulating basal-level expression of CUP1. Activates EGT2 transcription in the absence of SWI5. This is Metallothionein expression activator (ACE2) from Saccharomyces cerevisiae (strain ATCC 204508 / S288c) (Baker's yeast).